The sequence spans 159 residues: Sperm acrosome-associated protein 5 (159 aa).

The first 21 residues, 1 to 21 (MKAWGTVVVTLATLMVVTVDA), serve as a signal peptide directing secretion. Residues 22-150 (KIYERCELAA…SEWLKGCDMH (129 aa)) form the C-type lysozyme domain. 4 disulfide bridges follow: C27-C147, C51-C135, C85-C100, and C96-C114. The active site involves E56.

The protein belongs to the glycosyl hydrolase 22 family.

It is found in the secreted. It catalyses the reaction Hydrolysis of (1-&gt;4)-beta-linkages between N-acetylmuramic acid and N-acetyl-D-glucosamine residues in a peptidoglycan and between N-acetyl-D-glucosamine residues in chitodextrins.. This Homo sapiens (Human) protein is Sperm acrosome-associated protein 5 (SPACA5).